Here is a 581-residue protein sequence, read N- to C-terminus: MSAILSVDDLNDFISPGVACIKPIETLPTAAPPAGDANSSLEVEVILDGQQPEAKSNAPPAEISLTDCLACSGCVTSAEAVLVSLQSHNEVLNMLDSAPALKLVGPDANGKHSVQGLENSDAKLYVASVSPQSRASLAAACGNGVTEQQAGRMIEQLFLGEQGLARGGKWGNKFTWVVDTNTAREATLVLGSDEVLGGLIAPSDKAATPVLTASCPGWVCYAEKTHPYVLPHLSRVKSPQALMGTLLKTSLSRILDIAPERIWHLAVMPCFDKKLEASREELTDAVWAGDGKPGRGVRDVDCVITSKEVLMLAASRGFDFFSLSASMPPQTPRFPDQLIHDFLFRPGHRQQSREAGTSGGNMHFILRHLQAKNPGSQIQTVPGRNADVVEYKLIAEAGEVMFKAARYYGFRNIQNLVRKLKPAKTSRMPGGKPFGSAKRPAGKASGLDYGYVEVMACPGGCTNGGGQIKVDDQVVVDRKGLAVKPGPQEQKEWQKEVDEAYFSGDESGSRAQDESLDLVVDGISPSHIRNVLTHWSTLTGIQLERLAYTSYREVVSDVGKEKKMTDTERVVQLAGKIGGGW.

[4Fe-4S] cluster is bound by residues cysteine 20, cysteine 68, cysteine 71, cysteine 74, cysteine 215, cysteine 270, cysteine 457, and cysteine 461.

It belongs to the NARF family.

Functionally, component of the cytosolic Fe/S protein assembly machinery. Required for maturation of extramitochondrial Fe/S proteins. May play a role in the transfer of pre-assembled Fe/S clusters to target apoproteins. In Neurospora crassa (strain ATCC 24698 / 74-OR23-1A / CBS 708.71 / DSM 1257 / FGSC 987), this protein is Cytosolic Fe-S cluster assembly factor nar-1 (nar-1).